The primary structure comprises 510 residues: Probable cytosol aminopeptidase (510 aa).

Mn(2+) contacts are provided by lysine 272 and aspartate 277. Residue lysine 284 is part of the active site. Residues aspartate 296, aspartate 355, and glutamate 357 each contribute to the Mn(2+) site. Arginine 359 is a catalytic residue.

The protein belongs to the peptidase M17 family. Mn(2+) serves as cofactor.

The protein resides in the cytoplasm. It catalyses the reaction Release of an N-terminal amino acid, Xaa-|-Yaa-, in which Xaa is preferably Leu, but may be other amino acids including Pro although not Arg or Lys, and Yaa may be Pro. Amino acid amides and methyl esters are also readily hydrolyzed, but rates on arylamides are exceedingly low.. The enzyme catalyses Release of an N-terminal amino acid, preferentially leucine, but not glutamic or aspartic acids.. Functionally, presumably involved in the processing and regular turnover of intracellular proteins. Catalyzes the removal of unsubstituted N-terminal amino acids from various peptides. This chain is Probable cytosol aminopeptidase, found in Synechococcus sp. (strain JA-3-3Ab) (Cyanobacteria bacterium Yellowstone A-Prime).